The primary structure comprises 248 residues: Methionine aminopeptidase 1 (248 aa).

His77 contacts substrate. Positions 94, 105, and 168 each coordinate a divalent metal cation. His175 serves as a coordination point for substrate. Glu201 and Glu232 together coordinate a divalent metal cation.

As to quaternary structure, monomer. Co(2+) serves as cofactor. Zn(2+) is required as a cofactor. The cofactor is Mn(2+). Requires Fe(2+) as cofactor.

It localises to the cytoplasm. The enzyme catalyses Release of N-terminal amino acids, preferentially methionine, from peptides and arylamides.. Its function is as follows. Removes the N-terminal methionine from nascent proteins. The N-terminal methionine is often cleaved when the second residue in the primary sequence is small and uncharged (Met-Ala-, Cys, Gly, Pro, Ser, Thr, or Val). Requires deformylation of the N(alpha)-formylated initiator methionine before it can be hydrolyzed. The sequence is that of Methionine aminopeptidase 1 from Bacillus subtilis (strain 168).